A 520-amino-acid chain; its full sequence is 3-phosphoshikimate 1-carboxyvinyltransferase, chloroplastic (520 aa).

A chloroplast-targeting transit peptide spans 1-76 (MAQISSMAQG…RISASVATAE (76 aa)). 3-phosphoshikimate is bound by residues K99, S100, and R104. Residue K99 participates in phosphoenolpyruvate binding. Positions 177 and 207 each coordinate phosphoenolpyruvate. Residues S254, S255, Q256, S282, D407, and K434 each coordinate 3-phosphoshikimate. Q256 contacts phosphoenolpyruvate. Catalysis depends on D407, which acts as the Proton acceptor. R438, R480, and K505 together coordinate phosphoenolpyruvate.

This sequence belongs to the EPSP synthase family.

It localises to the plastid. The protein resides in the chloroplast. It carries out the reaction 3-phosphoshikimate + phosphoenolpyruvate = 5-O-(1-carboxyvinyl)-3-phosphoshikimate + phosphate. The protein operates within metabolic intermediate biosynthesis; chorismate biosynthesis; chorismate from D-erythrose 4-phosphate and phosphoenolpyruvate: step 6/7. Functionally, catalyzes the transfer of the enolpyruvyl moiety of phosphoenolpyruvate (PEP) to the 5-hydroxyl of shikimate-3-phosphate (S3P) to produce enolpyruvyl shikimate-3-phosphate and inorganic phosphate. In Solanum lycopersicum (Tomato), this protein is 3-phosphoshikimate 1-carboxyvinyltransferase, chloroplastic.